An 835-amino-acid chain; its full sequence is Protein translocase subunit SecA (835 aa).

ATP contacts are provided by residues Gln85, 103 to 107 (GEGKT), and Asp492. Positions 819, 821, 830, and 831 each coordinate Zn(2+).

The protein belongs to the SecA family. In terms of assembly, monomer and homodimer. Part of the essential Sec protein translocation apparatus which comprises SecA, SecYEG and auxiliary proteins SecDF. Other proteins may also be involved. The cofactor is Zn(2+).

The protein localises to the cell membrane. It is found in the cytoplasm. The catalysed reaction is ATP + H2O + cellular proteinSide 1 = ADP + phosphate + cellular proteinSide 2.. Part of the Sec protein translocase complex. Interacts with the SecYEG preprotein conducting channel. Has a central role in coupling the hydrolysis of ATP to the transfer of proteins into and across the cell membrane, serving as an ATP-driven molecular motor driving the stepwise translocation of polypeptide chains across the membrane. The chain is Protein translocase subunit SecA from Clostridium botulinum (strain Okra / Type B1).